A 209-amino-acid chain; its full sequence is ATP-dependent dethiobiotin synthetase BioD (209 aa).

13-18 (DVGKTV) is a binding site for ATP. T17 lines the Mg(2+) pocket. K33 is a catalytic residue. Mg(2+) is bound at residue E100. Residues 100-103 (EGAG) and 184-186 (PRL) contribute to the ATP site.

Belongs to the dethiobiotin synthetase family. In terms of assembly, homodimer. Requires Mg(2+) as cofactor.

It is found in the cytoplasm. The catalysed reaction is (7R,8S)-7,8-diammoniononanoate + CO2 + ATP = (4R,5S)-dethiobiotin + ADP + phosphate + 3 H(+). The protein operates within cofactor biosynthesis; biotin biosynthesis; biotin from 7,8-diaminononanoate: step 1/2. In terms of biological role, catalyzes a mechanistically unusual reaction, the ATP-dependent insertion of CO2 between the N7 and N8 nitrogen atoms of 7,8-diaminopelargonic acid (DAPA, also called 7,8-diammoniononanoate) to form a ureido ring. The chain is ATP-dependent dethiobiotin synthetase BioD from Rhizorhabdus wittichii (strain DSM 6014 / CCUG 31198 / JCM 15750 / NBRC 105917 / EY 4224 / RW1) (Sphingomonas wittichii).